The primary structure comprises 141 residues: VLSPADKTNVKGTWSKIGNHSAEYGAEALERMFINFPSTKTYFSHFDLGHGSAQIKGHGKKVADALTKAVGHIDNLPDALSELSDLHAHKLRVDPVNFKLLSHCLLVTLALHLPADFTPSVHASLDKFLASVSTVLTSKYR.

In terms of domain architecture, Globin spans 1-141 (VLSPADKTNV…VSTVLTSKYR (141 aa)). S3 bears the Phosphoserine mark. Residue K7 is modified to N6-succinyllysine. Position 8 is a phosphothreonine (T8). K11 is modified (N6-succinyllysine). Position 16 is an N6-acetyllysine; alternate (K16). K16 bears the N6-succinyllysine; alternate mark. A Phosphotyrosine modification is found at Y24. K40 is modified (N6-succinyllysine). H58 serves as a coordination point for O2. H87 serves as a coordination point for heme b. The residue at position 102 (S102) is a Phosphoserine. At T108 the chain carries Phosphothreonine. A phosphoserine mark is found at S124 and S131. Phosphothreonine is present on residues T134 and T137. At S138 the chain carries Phosphoserine.

Belongs to the globin family. As to quaternary structure, heterotetramer of two alpha chains and two beta chains. In terms of tissue distribution, red blood cells.

In terms of biological role, involved in oxygen transport from the lung to the various peripheral tissues. Functionally, hemopressin acts as an antagonist peptide of the cannabinoid receptor CNR1. Hemopressin-binding efficiently blocks cannabinoid receptor CNR1 and subsequent signaling. The polypeptide is Hemoglobin subunit alpha (HBA) (Tursiops truncatus (Atlantic bottle-nosed dolphin)).